The primary structure comprises 1414 residues: Phenyloxazoline synthase MbtB (1414 aa).

A Carrier 1 domain is found at 5–78; sequence TACSEIIRAE…AWSQLVSAGT (74 aa). Ser39 carries the post-translational modification O-(pantetheine 4'-phosphoryl)serine. The segment at 96–394 is condensation/cyclization; sequence EGEPFPLAPM…SSLLLDVDLT (299 aa). Residues 579 to 975 are adenylation; sequence SYAQLRDQAS…RLPGVHAAAA (397 aa). Residues 1057-1135 form the Carrier 2 domain; that stretch reads APRTVLQRAL…ALAQLLTGRE (79 aa). Ser1094 is subject to O-(pantetheine 4'-phosphoryl)serine. Positions 1188–1413 are thioesterase; that stretch reads GAVLVFPHAG…AVARMVSADV (226 aa).

This sequence belongs to the ATP-dependent AMP-binding enzyme family. MbtB subfamily. The cofactor is pantetheine 4'-phosphate. 4'-phosphopantetheine is transferred from CoA to a specific serine in each of the two carrier protein domains, leading to their activation from apo to holo forms.

It participates in siderophore biosynthesis; mycobactin biosynthesis. Its function is as follows. Involved in the initial steps of the mycobactin biosynthetic pathway. Putatively couples activated salicylic acid with serine or threonine and cyclizes this precursor to the hydroxyphenyloxazoline ring system present in this class of siderophores. Essential for growth in macrophages. This Mycobacterium tuberculosis (strain ATCC 25618 / H37Rv) protein is Phenyloxazoline synthase MbtB (mbtB).